We begin with the raw amino-acid sequence, 259 residues long: Glucosamine-6-phosphate deaminase (259 aa).

Asp66 functions as the Proton acceptor; for enolization step in the catalytic mechanism. The active-site For ring-opening step is Asp135. Residue His137 is the Proton acceptor; for ring-opening step of the active site. The For ring-opening step role is filled by Glu142.

Belongs to the glucosamine/galactosamine-6-phosphate isomerase family. NagB subfamily.

It catalyses the reaction alpha-D-glucosamine 6-phosphate + H2O = beta-D-fructose 6-phosphate + NH4(+). Its pathway is amino-sugar metabolism; N-acetylneuraminate degradation; D-fructose 6-phosphate from N-acetylneuraminate: step 5/5. Functionally, catalyzes the reversible isomerization-deamination of glucosamine 6-phosphate (GlcN6P) to form fructose 6-phosphate (Fru6P) and ammonium ion. In Rhodococcus jostii (strain RHA1), this protein is Glucosamine-6-phosphate deaminase.